The following is a 432-amino-acid chain: Enolase (432 aa).

Q167 contributes to the (2R)-2-phosphoglycerate binding site. The Proton donor role is filled by E209. Mg(2+) is bound by residues D246, E290, and D317. (2R)-2-phosphoglycerate is bound by residues K342, R371, S372, and K393. Catalysis depends on K342, which acts as the Proton acceptor.

It belongs to the enolase family. Component of the RNA degradosome, a multiprotein complex involved in RNA processing and mRNA degradation. Mg(2+) is required as a cofactor.

It is found in the cytoplasm. The protein localises to the secreted. It localises to the cell surface. The catalysed reaction is (2R)-2-phosphoglycerate = phosphoenolpyruvate + H2O. It participates in carbohydrate degradation; glycolysis; pyruvate from D-glyceraldehyde 3-phosphate: step 4/5. Catalyzes the reversible conversion of 2-phosphoglycerate (2-PG) into phosphoenolpyruvate (PEP). It is essential for the degradation of carbohydrates via glycolysis. The protein is Enolase of Klebsiella pneumoniae subsp. pneumoniae (strain ATCC 700721 / MGH 78578).